Here is a 106-residue protein sequence, read N- to C-terminus: Small ribosomal subunit protein uS10 (106 aa).

It belongs to the universal ribosomal protein uS10 family. In terms of assembly, part of the 30S ribosomal subunit.

Its function is as follows. Involved in the binding of tRNA to the ribosomes. The protein is Small ribosomal subunit protein uS10 of Solibacter usitatus (strain Ellin6076).